Here is a 161-residue protein sequence, read N- to C-terminus: MKKIIQFKDNLSSEISEQIKSSKSFIIFEYLGLDAATITKLRKDLFKTGSKLLVLKNNILRRALEKANIKEFGDLVGPNAIVWGTEDEIAPLKEVFNLTKDNECIKIKGSYVEGTFLDAQKTMSIASLPNREGLYSMLLSCLTGPIRGVLYALKAVSETKN.

Belongs to the universal ribosomal protein uL10 family. As to quaternary structure, part of the ribosomal stalk of the 50S ribosomal subunit. The N-terminus interacts with L11 and the large rRNA to form the base of the stalk. The C-terminus forms an elongated spine to which L12 dimers bind in a sequential fashion forming a multimeric L10(L12)X complex.

Forms part of the ribosomal stalk, playing a central role in the interaction of the ribosome with GTP-bound translation factors. The chain is Large ribosomal subunit protein uL10 from Malacoplasma penetrans (strain HF-2) (Mycoplasma penetrans).